Consider the following 188-residue polypeptide: Ribosome maturation factor RimM (188 aa).

Positions 96-169 (DDEFYYADLE…RILIDPMAAG (74 aa)) constitute a PRC barrel domain.

This sequence belongs to the RimM family. In terms of assembly, binds ribosomal protein uS19.

The protein localises to the cytoplasm. Functionally, an accessory protein needed during the final step in the assembly of 30S ribosomal subunit, possibly for assembly of the head region. Essential for efficient processing of 16S rRNA. May be needed both before and after RbfA during the maturation of 16S rRNA. It has affinity for free ribosomal 30S subunits but not for 70S ribosomes. In Agrobacterium fabrum (strain C58 / ATCC 33970) (Agrobacterium tumefaciens (strain C58)), this protein is Ribosome maturation factor RimM.